Consider the following 304-residue polypeptide: N-acetyllactosaminide alpha-2,3-sialyltransferase (304 aa).

CMP-N-acetyl-beta-neuraminate-binding positions include 221–225 (FPHPA), 242–243 (FE), and 262–263 (SS). Histidine 223 (proton donor) is an active-site residue.

Belongs to the glycosyltransferase 52 family.

The enzyme catalyses a beta-D-galactosyl-(1-&gt;4)-N-acetyl-beta-D-glucosaminyl derivative + CMP-N-acetyl-beta-neuraminate = an N-acetyl-alpha-neuraminyl-(2-&gt;3)-beta-D-galactosyl-(1-&gt;4)-N-acetyl-beta-D-glucosaminyl derivative + CMP + H(+). It functions in the pathway bacterial outer membrane biogenesis; lipooligosaccharide biosynthesis. In terms of biological role, catalyzes the transfer of sialic acid from the substrate CMP-N-acetylneuraminate to the terminal galactose residue of the N-acetyllactosamine moiety of surface lipooligosaccharide (LOS). Thus, functions in the sialylation of LOS, which plays a role in the evasion of the host immune response. This is N-acetyllactosaminide alpha-2,3-sialyltransferase from Haemophilus influenzae (strain ATCC 51907 / DSM 11121 / KW20 / Rd).